Consider the following 340-residue polypeptide: Selenide, water dikinase (340 aa).

U17 is a catalytic residue. A non-standard amino acid (selenocysteine) is located at residue U17. Residues K20 and 45–47 contribute to the ATP site; that span reads NNE. D48 is a binding site for Mg(2+). ATP is bound by residues D65, D88, and 136-138; that span reads GHT. D88 serves as a coordination point for Mg(2+). D224 is a Mg(2+) binding site.

Belongs to the selenophosphate synthase 1 family. Class I subfamily. As to quaternary structure, homodimer. It depends on Mg(2+) as a cofactor.

It carries out the reaction hydrogenselenide + ATP + H2O = selenophosphate + AMP + phosphate + 2 H(+). In terms of biological role, synthesizes selenophosphate from selenide and ATP. The sequence is that of Selenide, water dikinase from Campylobacter jejuni subsp. jejuni serotype O:2 (strain ATCC 700819 / NCTC 11168).